A 425-amino-acid polypeptide reads, in one-letter code: Gamma-glutamyl phosphate reductase (425 aa).

Belongs to the gamma-glutamyl phosphate reductase family.

The protein localises to the cytoplasm. It catalyses the reaction L-glutamate 5-semialdehyde + phosphate + NADP(+) = L-glutamyl 5-phosphate + NADPH + H(+). It participates in amino-acid biosynthesis; L-proline biosynthesis; L-glutamate 5-semialdehyde from L-glutamate: step 2/2. Catalyzes the NADPH-dependent reduction of L-glutamate 5-phosphate into L-glutamate 5-semialdehyde and phosphate. The product spontaneously undergoes cyclization to form 1-pyrroline-5-carboxylate. This Novosphingobium aromaticivorans (strain ATCC 700278 / DSM 12444 / CCUG 56034 / CIP 105152 / NBRC 16084 / F199) protein is Gamma-glutamyl phosphate reductase.